We begin with the raw amino-acid sequence, 115 residues long: MARVKNGIVHVARRKKILKKTKGFWGTKKSNYKKAKDTLRKGMMYATRDRKTRKRDFRSLWIVRISAALTGMGINYSKFFESLKKSNIKLNRKILSNLAIEDIETFKKIVYEIKN.

The protein belongs to the bacterial ribosomal protein bL20 family.

Its function is as follows. Binds directly to 23S ribosomal RNA and is necessary for the in vitro assembly process of the 50S ribosomal subunit. It is not involved in the protein synthesizing functions of that subunit. The polypeptide is Large ribosomal subunit protein bL20 (Borrelia turicatae (strain 91E135)).